Consider the following 381-residue polypeptide: Probable serine/threonine-protein kinase PBL25 (381 aa).

Cysteine 3 carries the S-palmitoyl cysteine lipid modification. The segment at 16-41 (GSSMPAPYKQPNSPKRTTGEVVAKNA) is disordered. Threonine 54 bears the Phosphothreonine mark. In terms of domain architecture, Protein kinase spans 65–342 (FRQECLIGEG…SDVITALSFL (278 aa)). Residues 71-79 (IGEGGFGRV) and lysine 94 contribute to the ATP site. Tyrosine 139 is subject to Phosphotyrosine. Catalysis depends on aspartate 192, which acts as the Proton acceptor. Serine 196 and serine 226 each carry phosphoserine. Residue threonine 232 is modified to Phosphothreonine. Residue tyrosine 240 is modified to Phosphotyrosine. The disordered stretch occupies residues 347-381 (NSSNTGSNHLQQNRSNKYQDAVQWDSSPRYANSQM). Over residues 355–381 (HLQQNRSNKYQDAVQWDSSPRYANSQM) the composition is skewed to polar residues.

Belongs to the protein kinase superfamily. Ser/Thr protein kinase family.

The protein resides in the cell membrane. It catalyses the reaction L-seryl-[protein] + ATP = O-phospho-L-seryl-[protein] + ADP + H(+). The enzyme catalyses L-threonyl-[protein] + ATP = O-phospho-L-threonyl-[protein] + ADP + H(+). In terms of biological role, may be involved in plant defense signaling. In Arabidopsis thaliana (Mouse-ear cress), this protein is Probable serine/threonine-protein kinase PBL25.